The primary structure comprises 263 residues: MALQIPSLLLLAAVVVLTVLSSPGTEGGNSERHFVHQFQPFCYFTNGTQRIRLVIRYIYNREEYVRFDSDVGEYRAVTELGRPDAEYWNKQYLERTRAELDTVCRHNYEKTETPTSLRRLEQPSVVISLSRTEALNHHNTLVCSVTDFYPAKIKVRWFRNGQEETVGVSSTQLIRNGDWTFQVLVMLEMTPRRGEVYTCHVEHPSLKSPITVEWRAQSESARSKMLSGIGGCVLGVIFLGLGLFIRHRSQKGPRGPPPAGLLQ.

The first 27 residues, 1–27 (MALQIPSLLLLAAVVVLTVLSSPGTEG), serve as a signal peptide directing secretion. A beta-1 region spans residues 28 to 120 (GNSERHFVHQ…TETPTSLRRL (93 aa)). Residues 28 to 224 (GNSERHFVHQ…RAQSESARSK (197 aa)) lie on the Extracellular side of the membrane. 2 cysteine pairs are disulfide-bonded: Cys42/Cys104 and Cys143/Cys199. N-linked (GlcNAc...) asparagine glycosylation is present at Asn46. The tract at residues 121–214 (EQPSVVISLS…SLKSPITVEW (94 aa)) is beta-2. Residues 123-211 (PSVVISLSRT…EHPSLKSPIT (89 aa)) form the Ig-like C1-type domain. A connecting peptide region spans residues 215–224 (RAQSESARSK). Residues 225-245 (MLSGIGGCVLGVIFLGLGLFI) traverse the membrane as a helical segment. Residues 246–263 (RHRSQKGPRGPPPAGLLQ) lie on the Cytoplasmic side of the membrane.

Belongs to the MHC class II family. Post-translationally, ubiquitinated in immature dendritic cells leading to down-regulation of MHC class II.

The protein localises to the membrane. This is H-2 class II histocompatibility antigen, A-K beta chain (H2-Ab1) from Mus musculus (Mouse).